A 428-amino-acid chain; its full sequence is Elongation factor 1-alpha (428 aa).

Residues 5–215 (KPHVNIVFIG…ALDQIPEPPK (211 aa)) enclose the tr-type G domain. A G1 region spans residues 14–21 (GHVDHGKS). 14–21 (GHVDHGKS) contacts GTP. Residue serine 21 participates in Mg(2+) binding. The interval 68–72 (GITID) is G2. Residues 89–92 (DAPG) are G3. GTP is bound by residues 89-93 (DAPGH) and 144-147 (NKMD). Positions 144-147 (NKMD) are G4. The interval 181–183 (SAW) is G5.

This sequence belongs to the TRAFAC class translation factor GTPase superfamily. Classic translation factor GTPase family. EF-Tu/EF-1A subfamily.

The protein localises to the cytoplasm. It carries out the reaction GTP + H2O = GDP + phosphate + H(+). In terms of biological role, GTP hydrolase that promotes the GTP-dependent binding of aminoacyl-tRNA to the A-site of ribosomes during protein biosynthesis. This chain is Elongation factor 1-alpha, found in Thermococcus onnurineus (strain NA1).